The chain runs to 505 residues: Cytochrome c oxidase subunit 1 (505 aa).

Residues 14–34 (LLYLVFAFFGGLLGTSLSMLI) traverse the membrane as a helical segment. Glu-37 and Gly-42 together coordinate Ca(2+). A run of 6 helical transmembrane segments spans residues 55–75 (VIIT…ALFG), 98–118 (NISF…TLVE), 143–163 (AILS…NMLV), 180–200 (LFVW…PVLA), 229–249 (LFWF…FGIV), and 261–281 (VFGL…GFIV). His-60 provides a ligand contact to Fe(II)-heme a. Cu cation contacts are provided by His-235 and Tyr-239. A cross-link (1'-histidyl-3'-tyrosine (His-Tyr)) is located at residues 235–239 (HPEVY). Tyr-239 serves as a coordination point for O2. Cu cation is bound by residues His-284 and His-285. The next 2 membrane-spanning stretches (helical) occupy residues 302–322 (ATMI…ATIY) and 332–352 (MWFA…GVVL). His-362 and Asp-363 together coordinate Mg(2+). His-370 serves as a coordination point for heme a3. A Fe(II)-heme a-binding site is contributed by His-372. 3 helical membrane passes run 374–394 (VLSM…GNLI), 408–428 (FWLL…LGLA), and 446–466 (AVSS…ATTF).

Belongs to the heme-copper respiratory oxidase family. In terms of assembly, component of the cytochrome c oxidase (complex IV, CIV), a multisubunit enzyme composed of a catalytic core of 3 subunits and several supernumerary subunits. The complex exists as a monomer or a dimer and forms supercomplexes (SCs) in the inner mitochondrial membrane with ubiquinol-cytochrome c oxidoreductase (cytochrome b-c1 complex, complex III, CIII). Heme is required as a cofactor. It depends on Cu cation as a cofactor.

The protein localises to the mitochondrion inner membrane. The enzyme catalyses 4 Fe(II)-[cytochrome c] + O2 + 8 H(+)(in) = 4 Fe(III)-[cytochrome c] + 2 H2O + 4 H(+)(out). Its pathway is energy metabolism; oxidative phosphorylation. Its function is as follows. Component of the cytochrome c oxidase, the last enzyme in the mitochondrial electron transport chain which drives oxidative phosphorylation. The respiratory chain contains 3 multisubunit complexes succinate dehydrogenase (complex II, CII), ubiquinol-cytochrome c oxidoreductase (cytochrome b-c1 complex, complex III, CIII) and cytochrome c oxidase (complex IV, CIV), that cooperate to transfer electrons derived from NADH and succinate to molecular oxygen, creating an electrochemical gradient over the inner membrane that drives transmembrane transport and the ATP synthase. Cytochrome c oxidase is the component of the respiratory chain that catalyzes the reduction of oxygen to water. Electrons originating from reduced cytochrome c in the intermembrane space (IMS) are transferred via the dinuclear copper A center (CU(A)) of subunit 2 and heme A of subunit 1 to the active site in subunit 1, a binuclear center (BNC) formed by heme A3 and copper B (CU(B)). The BNC reduces molecular oxygen to 2 water molecules using 4 electrons from cytochrome c in the IMS and 4 protons from the mitochondrial matrix. The polypeptide is Cytochrome c oxidase subunit 1 (COX1) (Chlamydomonas reinhardtii (Chlamydomonas smithii)).